The primary structure comprises 414 residues: Tryptophan synthase beta chain (414 aa).

K105 is subject to N6-(pyridoxal phosphate)lysine.

The protein belongs to the TrpB family. Tetramer of two alpha and two beta chains. It depends on pyridoxal 5'-phosphate as a cofactor.

It carries out the reaction (1S,2R)-1-C-(indol-3-yl)glycerol 3-phosphate + L-serine = D-glyceraldehyde 3-phosphate + L-tryptophan + H2O. The protein operates within amino-acid biosynthesis; L-tryptophan biosynthesis; L-tryptophan from chorismate: step 5/5. In terms of biological role, the beta subunit is responsible for the synthesis of L-tryptophan from indole and L-serine. In Gloeobacter violaceus (strain ATCC 29082 / PCC 7421), this protein is Tryptophan synthase beta chain.